The sequence spans 336 residues: Izumo sperm-egg fusion protein 1 (336 aa).

The signal sequence occupies residues 1–16 (MTLPILLGWFLTLCSS). The 90-residue stretch at 158–247 (PPLDCGEHHL…LKDQKGTALS (90 aa)) folds into the Ig-like C2-type domain. A disulfide bridge connects residues C179 and C236. Residues 287–307 (SFLTVLILLTVLSITGSLIII) form a helical membrane-spanning segment.

Belongs to the Izumo family. As to quaternary structure, forms a complex with tmem81 and spaca6 on spermatocyte cell membrane. The complex binds to oocyte protein bncr. Expressed in sperm.

The protein localises to the cell membrane. It localises to the cytoplasmic vesicle. It is found in the secretory vesicle. The protein resides in the acrosome membrane. Its function is as follows. Essential sperm cell-surface protein required for fertilization by acting as a ligand for bncr receptor on egg. The interaction of the complex izumo1:spaca6:tmemt81 with bncr is a necessary adhesion event between sperm and egg that is required for fertilization. The polypeptide is Izumo sperm-egg fusion protein 1 (Danio rerio (Zebrafish)).